We begin with the raw amino-acid sequence, 1062 residues long: Carbamoyl phosphate synthase large chain (1062 aa).

A carboxyphosphate synthetic domain region spans residues 1 to 401 (MPKRKDIHKI…AMQKAVRSLE (401 aa)). The ATP site is built by Arg-129, Arg-169, Gly-175, Gly-176, Lys-208, Ile-210, Glu-215, Gly-241, Ile-242, His-243, Gln-284, and Glu-298. The 195-residue stretch at 133 to 327 (KNLCKELGEP…IAKMAAKIAV (195 aa)) folds into the ATP-grasp 1 domain. Residues Gln-284, Glu-298, and Asn-300 each coordinate Mg(2+). Residues Gln-284, Glu-298, and Asn-300 each contribute to the Mn(2+) site. The oligomerization domain stretch occupies residues 402–546 (IDEKDLYSEE…YSTYDAENES (145 aa)). The segment at 547–929 (HRSGKKSVIV…ALYKAFAGAK (383 aa)) is carbamoyl phosphate synthetic domain. Positions 671–861 (DDIIKELKLN…MAQVATRVIM (191 aa)) constitute an ATP-grasp 2 domain. Residues Arg-707, Asp-746, Leu-748, Glu-752, Gly-777, Val-778, His-779, Ser-780, Gln-820, and Glu-832 each coordinate ATP. Gln-820, Glu-832, and Asn-834 together coordinate Mg(2+). Positions 820, 832, and 834 each coordinate Mn(2+). The region spanning 930-1062 (MQLPENGNVL…NRSFATDALQ (133 aa)) is the MGS-like domain. The segment at 930-1062 (MQLPENGNVL…NRSFATDALQ (133 aa)) is allosteric domain.

The protein belongs to the CarB family. Composed of two chains; the small (or glutamine) chain promotes the hydrolysis of glutamine to ammonia, which is used by the large (or ammonia) chain to synthesize carbamoyl phosphate. Tetramer of heterodimers (alpha,beta)4. The cofactor is Mg(2+). Mn(2+) is required as a cofactor.

It catalyses the reaction hydrogencarbonate + L-glutamine + 2 ATP + H2O = carbamoyl phosphate + L-glutamate + 2 ADP + phosphate + 2 H(+). The enzyme catalyses hydrogencarbonate + NH4(+) + 2 ATP = carbamoyl phosphate + 2 ADP + phosphate + 2 H(+). It participates in amino-acid biosynthesis; L-arginine biosynthesis; carbamoyl phosphate from bicarbonate: step 1/1. The protein operates within pyrimidine metabolism; UMP biosynthesis via de novo pathway; (S)-dihydroorotate from bicarbonate: step 1/3. In terms of biological role, large subunit of the glutamine-dependent carbamoyl phosphate synthetase (CPSase). CPSase catalyzes the formation of carbamoyl phosphate from the ammonia moiety of glutamine, carbonate, and phosphate donated by ATP, constituting the first step of 2 biosynthetic pathways, one leading to arginine and/or urea and the other to pyrimidine nucleotides. The large subunit (synthetase) binds the substrates ammonia (free or transferred from glutamine from the small subunit), hydrogencarbonate and ATP and carries out an ATP-coupled ligase reaction, activating hydrogencarbonate by forming carboxy phosphate which reacts with ammonia to form carbamoyl phosphate. The chain is Carbamoyl phosphate synthase large chain from Lactobacillus acidophilus (strain ATCC 700396 / NCK56 / N2 / NCFM).